The chain runs to 410 residues: TNF receptor-associated factor family protein DDB_G0279745 (410 aa).

An RING-type; degenerate zinc finger spans residues 27–67 (CVICSFPLFDGLQCKRGHGACKSCWEKIIGENGKKECHSCR). 2 TRAF-type zinc fingers span residues 81-154 (YLEK…SLEQ) and 154-213 (QHQN…DESI). Residues 216–284 (LSNSIVEIQK…SMINKLDDSA (69 aa)) are a coiled coil.

It belongs to the TNF receptor-associated factor family.

It is found in the cytoplasm. Functionally, probable adapter protein and signal transducer that links members of the tumor necrosis factor receptor family to different signaling pathways by association with the receptor cytoplasmic domain and kinases. This chain is TNF receptor-associated factor family protein DDB_G0279745, found in Dictyostelium discoideum (Social amoeba).